A 330-amino-acid polypeptide reads, in one-letter code: Ketol-acid reductoisomerase (NADP(+)) (330 aa).

A KARI N-terminal Rossmann domain is found at 1 to 181; that stretch reads MNVYYEQDAD…GGAKAGVIET (181 aa). NADP(+) contacts are provided by residues 24-27, Arg47, Ser50, Ser52, and 82-85; these read YGSQ and DQYQ. The active site involves His107. Residue Gly133 coordinates NADP(+). The KARI C-terminal knotted domain maps to 182-327; that stretch reads TIKDETETDL…AKLRNMMSWL (146 aa). Mg(2+) contacts are provided by Asp190, Glu194, Glu226, and Glu230. Ser251 lines the substrate pocket.

Belongs to the ketol-acid reductoisomerase family. Requires Mg(2+) as cofactor.

It carries out the reaction (2R)-2,3-dihydroxy-3-methylbutanoate + NADP(+) = (2S)-2-acetolactate + NADPH + H(+). It catalyses the reaction (2R,3R)-2,3-dihydroxy-3-methylpentanoate + NADP(+) = (S)-2-ethyl-2-hydroxy-3-oxobutanoate + NADPH + H(+). It functions in the pathway amino-acid biosynthesis; L-isoleucine biosynthesis; L-isoleucine from 2-oxobutanoate: step 2/4. It participates in amino-acid biosynthesis; L-valine biosynthesis; L-valine from pyruvate: step 2/4. Functionally, involved in the biosynthesis of branched-chain amino acids (BCAA). Catalyzes an alkyl-migration followed by a ketol-acid reduction of (S)-2-acetolactate (S2AL) to yield (R)-2,3-dihydroxy-isovalerate. In the isomerase reaction, S2AL is rearranged via a Mg-dependent methyl migration to produce 3-hydroxy-3-methyl-2-ketobutyrate (HMKB). In the reductase reaction, this 2-ketoacid undergoes a metal-dependent reduction by NADPH to yield (R)-2,3-dihydroxy-isovalerate. The polypeptide is Ketol-acid reductoisomerase (NADP(+)) (Prosthecochloris aestuarii (strain DSM 271 / SK 413)).